A 197-amino-acid polypeptide reads, in one-letter code: ATP-dependent Clp protease proteolytic subunit 2 (197 aa).

Ser-96 (nucleophile) is an active-site residue. His-121 is an active-site residue.

The protein belongs to the peptidase S14 family. In terms of assembly, fourteen ClpP subunits assemble into 2 heptameric rings which stack back to back to give a disk-like structure with a central cavity, resembling the structure of eukaryotic proteasomes.

Its subcellular location is the cytoplasm. It catalyses the reaction Hydrolysis of proteins to small peptides in the presence of ATP and magnesium. alpha-casein is the usual test substrate. In the absence of ATP, only oligopeptides shorter than five residues are hydrolyzed (such as succinyl-Leu-Tyr-|-NHMec, and Leu-Tyr-Leu-|-Tyr-Trp, in which cleavage of the -Tyr-|-Leu- and -Tyr-|-Trp bonds also occurs).. Cleaves peptides in various proteins in a process that requires ATP hydrolysis. Has a chymotrypsin-like activity. Plays a major role in the degradation of misfolded proteins. In Parasynechococcus marenigrum (strain WH8102), this protein is ATP-dependent Clp protease proteolytic subunit 2.